A 417-amino-acid polypeptide reads, in one-letter code: Serine hydroxymethyltransferase (417 aa).

N6-acetyllysine is present on lysine 54. Residues leucine 121 and 125 to 127 contribute to the (6S)-5,6,7,8-tetrahydrofolate site; that span reads GHL. Lysine 229 is subject to N6-(pyridoxal phosphate)lysine. Residues lysine 250, lysine 285, and lysine 354 each carry the N6-acetyllysine modification. A (6S)-5,6,7,8-tetrahydrofolate-binding site is contributed by 355–357; sequence SPF. Lysine 375 carries the N6-acetyllysine modification.

It belongs to the SHMT family. In terms of assembly, homodimer. Requires pyridoxal 5'-phosphate as cofactor.

The protein localises to the cytoplasm. The catalysed reaction is (6R)-5,10-methylene-5,6,7,8-tetrahydrofolate + glycine + H2O = (6S)-5,6,7,8-tetrahydrofolate + L-serine. It participates in one-carbon metabolism; tetrahydrofolate interconversion. The protein operates within amino-acid biosynthesis; glycine biosynthesis; glycine from L-serine: step 1/1. Catalyzes the reversible interconversion of serine and glycine with tetrahydrofolate (THF) serving as the one-carbon carrier. This reaction serves as the major source of one-carbon groups required for the biosynthesis of purines, thymidylate, methionine, and other important biomolecules. Also exhibits THF-independent aldolase activity toward beta-hydroxyamino acids, producing glycine and aldehydes, via a retro-aldol mechanism. The polypeptide is Serine hydroxymethyltransferase (Escherichia coli O17:K52:H18 (strain UMN026 / ExPEC)).